Here is a 150-residue protein sequence, read N- to C-terminus: Leukotriene C4 synthase (150 aa).

The Cytoplasmic segment spans residues 1 to 6; the sequence is MKEETA. Residues 7 to 27 form a helical membrane-spanning segment; that stretch reads LLATVTLLGVLLQAYFSLQVI. The Lumenal portion of the chain corresponds to 28 to 48; that stretch reads SARRTFHVSPPLTSGPPEFER. Arginine 30 provides a ligand contact to glutathione. Arginine 31 (proton donor) is an active-site residue. The residue at position 36 (serine 36) is a Phosphoserine. A helical transmembrane segment spans residues 49 to 69; sequence VFRAQVNCSEYFPLFLATLWV. Residues 51–55 and 58–59 contribute to the glutathione site; these read RAQVN and EY. Over 70–73 the chain is Cytoplasmic; that stretch reads AGIF. The helical transmembrane segment at 74–94 threads the bilayer; that stretch reads FHEGAAALCGLFYLFARLRYF. 93–97 provides a ligand contact to glutathione; that stretch reads YFQGY. Residues 95–104 are Lumenal-facing; sequence QGYARSAQHR. Arginine 104 acts as the Proton acceptor in catalysis. A helical transmembrane segment spans residues 105–124; that stretch reads LDPLYASARALWLLVAMAAL. Over 125 to 150 the chain is Cytoplasmic; the sequence is GLLVHFLPGTLRAALFRWLQVLLPMA.

This sequence belongs to the MAPEG family. As to quaternary structure, homotrimer. Interacts with ALOX5AP and ALOX5. In terms of processing, phosphorylation at Ser-36 by RPS6KB1 inhibits the leukotriene-C4 synthase activity.

The protein resides in the nucleus outer membrane. The protein localises to the endoplasmic reticulum membrane. It is found in the nucleus membrane. The catalysed reaction is leukotriene C4 = leukotriene A4 + glutathione. It catalyses the reaction (13S,14S)-epoxy-(4Z,7Z,9E,11E,16Z,19Z)-docosahexaenoate + glutathione = (13R)-S-glutathionyl-(14S)-hydroxy-(4Z,7Z,9E,11E,16Z,19Z)-docosahexaenoate. The protein operates within lipid metabolism; leukotriene C4 biosynthesis. Its activity is regulated as follows. Inhibited by MK886. Functionally, catalyzes the conjugation of leukotriene A4 with reduced glutathione (GSH) to form leukotriene C4 with high specificity. Can also catalyze the transfer of a glutathionyl group from glutathione (GSH) to 13(S),14(S)-epoxy-docosahexaenoic acid to form maresin conjugate in tissue regeneration 1 (MCTR1), a bioactive lipid mediator that possess potent anti-inflammatory and proresolving actions. The chain is Leukotriene C4 synthase (Ltc4s) from Rattus norvegicus (Rat).